Reading from the N-terminus, the 776-residue chain is Serine/threonine-protein kinase-like protein CCR2 (776 aa).

The signal sequence occupies residues M1–A22. Topologically, residues Y23–L432 are extracellular. N-linked (GlcNAc...) asparagine glycans are attached at residues N59, N92, N154, N162, N205, N278, N287, and N350. The TNFR-Cys repeat unit spans residues N341 to C396. 3 disulfides stabilise this stretch: C342–C371, C374–C388, and C378–C396. An N-linked (GlcNAc...) asparagine glycan is attached at N404. The helical transmembrane segment at V433 to I453 threads the bilayer. The Cytoplasmic segment spans residues P454–F776. The Protein kinase domain occupies F519 to F776. Residues L525–V533 and K547 each bind ATP. The active-site Proton acceptor is D644.

This sequence belongs to the protein kinase superfamily. Ser/Thr protein kinase family. In terms of assembly, homodimer. Expressed in roots, leaves, shoot apical meristems (SAM), and floral buds.

The protein localises to the membrane. It carries out the reaction L-seryl-[protein] + ATP = O-phospho-L-seryl-[protein] + ADP + H(+). It catalyses the reaction L-threonyl-[protein] + ATP = O-phospho-L-threonyl-[protein] + ADP + H(+). Serine/threonine-protein kinase with low activity. This Arabidopsis thaliana (Mouse-ear cress) protein is Serine/threonine-protein kinase-like protein CCR2 (CCR2).